A 427-amino-acid chain; its full sequence is Proline--tRNA ligase (427 aa).

The protein belongs to the class-II aminoacyl-tRNA synthetase family. ProS type 2 subfamily. Homodimer.

It is found in the cytoplasm. It carries out the reaction tRNA(Pro) + L-proline + ATP = L-prolyl-tRNA(Pro) + AMP + diphosphate. Functionally, catalyzes the attachment of proline to tRNA(Pro) in a two-step reaction: proline is first activated by ATP to form Pro-AMP and then transferred to the acceptor end of tRNA(Pro). This chain is Proline--tRNA ligase, found in Rickettsia akari (strain Hartford).